The chain runs to 238 residues: UDP-2,3-diacylglucosamine hydrolase (238 aa).

Residues Asp-8, His-10, Asp-41, Asn-78, and His-113 each contribute to the Mn(2+) site. Asn-78–Arg-79 is a binding site for substrate. Positions 121, 159, 163, 166, and 194 each coordinate substrate. Mn(2+)-binding residues include His-194 and His-196.

This sequence belongs to the LpxH family. The cofactor is Mn(2+).

The protein resides in the cell inner membrane. The catalysed reaction is UDP-2-N,3-O-bis[(3R)-3-hydroxytetradecanoyl]-alpha-D-glucosamine + H2O = 2-N,3-O-bis[(3R)-3-hydroxytetradecanoyl]-alpha-D-glucosaminyl 1-phosphate + UMP + 2 H(+). The protein operates within glycolipid biosynthesis; lipid IV(A) biosynthesis; lipid IV(A) from (3R)-3-hydroxytetradecanoyl-[acyl-carrier-protein] and UDP-N-acetyl-alpha-D-glucosamine: step 4/6. Its function is as follows. Hydrolyzes the pyrophosphate bond of UDP-2,3-diacylglucosamine to yield 2,3-diacylglucosamine 1-phosphate (lipid X) and UMP by catalyzing the attack of water at the alpha-P atom. Involved in the biosynthesis of lipid A, a phosphorylated glycolipid that anchors the lipopolysaccharide to the outer membrane of the cell. In Shewanella piezotolerans (strain WP3 / JCM 13877), this protein is UDP-2,3-diacylglucosamine hydrolase.